A 291-amino-acid polypeptide reads, in one-letter code: m-AAA protease-interacting protein 1, mitochondrial (291 aa).

The N-terminal 96 residues, 1–96, are a transit peptide targeting the mitochondrion; that stretch reads MALAARLLPL…SLPASPSRSY (96 aa).

Interacts with AFG3L2. Interacts with SPG7. Interacts with SMDT1/EMRE (via the N-terminal transit peptide); interaction is direct and takes place before maturation of SMDT1/EMRE.

The protein localises to the mitochondrion matrix. In terms of biological role, promotes sorting of SMDT1/EMRE in mitochondria by ensuring its maturation. Interacts with the transit peptide region of SMDT1/EMRE precursor protein in the mitochondrial matrix, leading to protect it against protein degradation by YME1L1, thereby ensuring SMDT1/EMRE maturation by the mitochondrial processing peptidase (PMPCA and PMPCB). The chain is m-AAA protease-interacting protein 1, mitochondrial from Mus musculus (Mouse).